Consider the following 805-residue polypeptide: Sucrose synthase 1 (805 aa).

Residues 274-751 (MVFNVVILSP…GLQRIYEKYT (478 aa)) are GT-B glycosyltransferase.

Belongs to the glycosyltransferase 1 family. Plant sucrose synthase subfamily.

It carries out the reaction an NDP-alpha-D-glucose + D-fructose = a ribonucleoside 5'-diphosphate + sucrose + H(+). Its function is as follows. Sucrose-cleaving enzyme that provides UDP-glucose and fructose for various metabolic pathways. The chain is Sucrose synthase 1 from Tulipa gesneriana (Garden tulip).